Reading from the N-terminus, the 104-residue chain is Large ribosomal subunit protein uL24 (104 aa).

Belongs to the universal ribosomal protein uL24 family. Part of the 50S ribosomal subunit.

Its function is as follows. One of two assembly initiator proteins, it binds directly to the 5'-end of the 23S rRNA, where it nucleates assembly of the 50S subunit. Functionally, one of the proteins that surrounds the polypeptide exit tunnel on the outside of the subunit. The chain is Large ribosomal subunit protein uL24 from Mesorhizobium japonicum (strain LMG 29417 / CECT 9101 / MAFF 303099) (Mesorhizobium loti (strain MAFF 303099)).